A 120-amino-acid polypeptide reads, in one-letter code: Aspartate 1-decarboxylase (120 aa).

The active-site Schiff-base intermediate with substrate; via pyruvic acid is Ser-24. Residue Ser-24 is modified to Pyruvic acid (Ser). Thr-56 serves as a coordination point for substrate. The Proton donor role is filled by Tyr-57. 70–72 (GAA) serves as a coordination point for substrate.

It belongs to the PanD family. As to quaternary structure, heterooctamer of four alpha and four beta subunits. Pyruvate is required as a cofactor. Is synthesized initially as an inactive proenzyme, which is activated by self-cleavage at a specific serine bond to produce a beta-subunit with a hydroxyl group at its C-terminus and an alpha-subunit with a pyruvoyl group at its N-terminus.

Its subcellular location is the cytoplasm. The catalysed reaction is L-aspartate + H(+) = beta-alanine + CO2. The protein operates within cofactor biosynthesis; (R)-pantothenate biosynthesis; beta-alanine from L-aspartate: step 1/1. In terms of biological role, catalyzes the pyruvoyl-dependent decarboxylation of aspartate to produce beta-alanine. This is Aspartate 1-decarboxylase from Pyrobaculum islandicum (strain DSM 4184 / JCM 9189 / GEO3).